Here is a 63-residue protein sequence, read N- to C-terminus: Large ribosomal subunit protein uL30 (63 aa).

The protein belongs to the universal ribosomal protein uL30 family. Part of the 50S ribosomal subunit.

The protein is Large ribosomal subunit protein uL30 of Rickettsia massiliae (strain Mtu5).